Reading from the N-terminus, the 115-residue chain is MRFMLKSKLHMACVTDKNINYEGSIEIDEELMNIVDLKENELVLIADLNNGQRFETYVIKGKPGSGTISLNGAAARLVEKGDRIIVMSFGIFNDGEYSGPKVAILNEKNQVIHLK.

Catalysis depends on Ser24, which acts as the Schiff-base intermediate with substrate; via pyruvic acid. Ser24 carries the post-translational modification Pyruvic acid (Ser). Thr56 is a binding site for substrate. Residue Tyr57 is the Proton donor of the active site. 72-74 (GAA) provides a ligand contact to substrate.

This sequence belongs to the PanD family. Heterooctamer of four alpha and four beta subunits. Requires pyruvate as cofactor. In terms of processing, is synthesized initially as an inactive proenzyme, which is activated by self-cleavage at a specific serine bond to produce a beta-subunit with a hydroxyl group at its C-terminus and an alpha-subunit with a pyruvoyl group at its N-terminus.

It is found in the cytoplasm. The catalysed reaction is L-aspartate + H(+) = beta-alanine + CO2. It functions in the pathway cofactor biosynthesis; (R)-pantothenate biosynthesis; beta-alanine from L-aspartate: step 1/1. Catalyzes the pyruvoyl-dependent decarboxylation of aspartate to produce beta-alanine. The protein is Aspartate 1-decarboxylase of Pseudothermotoga lettingae (strain ATCC BAA-301 / DSM 14385 / NBRC 107922 / TMO) (Thermotoga lettingae).